Here is a 194-residue protein sequence, read N- to C-terminus: Endoribonuclease ToxN (194 aa).

A coiled-coil region spans residues 114–182; the sequence is MLKQYLFLKE…DQAKERDKAR (69 aa). Residues 171–182 show a composition bias toward basic and acidic residues; that stretch reads ERDQAKERDKAR. Residues 171–194 are disordered; sequence ERDQAKERDKARRIAYMRQMGRER.

It belongs to the ToxN/AbiQ toxin family. In terms of assembly, one ToxN monomer binds to a 34-nt-long single repeat of the ToxI RNA; this complex forms a triangular heterohexameric complex with ToxN connected by the ToxI RNA to another toxin molecule. The ToxI repeats are cleavage products of their precursor. The ToxI repeat forms a pseudoknot which occludes the toxin active site.

Toxic component of a type III toxin-antitoxin (TA) system. An endoribonuclease which cleaves between the first and second A of AAAAA sequences; it tolerates other nucleotides in positions +2 and +4 of the consensus. Digests cognate antitoxin RNA ToxI as shown by the 2'-3'-cyclic phosphate at the 3' end of the 34-nt repeats and probably other RNAs. Inhibits growth when expressed in E.coli without causing cell lysis; this bacteriostatic effect is neutralized by cognate RNA antitoxin ToxI, which has 2.9 nearly identical 34 nucleotide-long repeats. Non-cognate antitoxin RNA from P.atrosepticum does not inhibit this toxin. The toxin-antitoxin pair function in plasmid maintenance (a plasmid addiction system), but unlike its P.atrosepticum homolog it is not seen to confer resistance to bacteriophages. This Bacillus thuringiensis subsp. kurstaki protein is Endoribonuclease ToxN.